A 199-amino-acid polypeptide reads, in one-letter code: 7-methyl-GTP pyrophosphatase (199 aa).

Asp74 serves as the catalytic Proton acceptor.

This sequence belongs to the Maf family. YceF subfamily. It depends on a divalent metal cation as a cofactor.

The protein localises to the cytoplasm. It catalyses the reaction N(7)-methyl-GTP + H2O = N(7)-methyl-GMP + diphosphate + H(+). Its function is as follows. Nucleoside triphosphate pyrophosphatase that hydrolyzes 7-methyl-GTP (m(7)GTP). May have a dual role in cell division arrest and in preventing the incorporation of modified nucleotides into cellular nucleic acids. The protein is 7-methyl-GTP pyrophosphatase of Cupriavidus pinatubonensis (strain JMP 134 / LMG 1197) (Cupriavidus necator (strain JMP 134)).